A 446-amino-acid chain; its full sequence is Glutamyl-tRNA reductase (446 aa).

Residues 49–52, Ser-108, 113–115, and Gln-119 each bind substrate; these read TCNR and ETQ. Cys-50 functions as the Nucleophile in the catalytic mechanism. 188-193 serves as a coordination point for NADP(+); that stretch reads GAGKMS.

It belongs to the glutamyl-tRNA reductase family. As to quaternary structure, homodimer.

It catalyses the reaction (S)-4-amino-5-oxopentanoate + tRNA(Glu) + NADP(+) = L-glutamyl-tRNA(Glu) + NADPH + H(+). Its pathway is porphyrin-containing compound metabolism; protoporphyrin-IX biosynthesis; 5-aminolevulinate from L-glutamyl-tRNA(Glu): step 1/2. Functionally, catalyzes the NADPH-dependent reduction of glutamyl-tRNA(Glu) to glutamate 1-semialdehyde (GSA). In Desulforudis audaxviator (strain MP104C), this protein is Glutamyl-tRNA reductase.